Here is a 333-residue protein sequence, read N- to C-terminus: Quinolinate synthase (333 aa).

The iminosuccinate site is built by His-41 and Ser-58. Cys-103 contacts [4Fe-4S] cluster. Iminosuccinate-binding positions include 129-131 (YIN) and Ser-146. Cys-189 serves as a coordination point for [4Fe-4S] cluster. Residues 215 to 217 (HPE) and Thr-232 contribute to the iminosuccinate site. Residue Cys-282 participates in [4Fe-4S] cluster binding.

Belongs to the quinolinate synthase family. Type 2 subfamily. The cofactor is [4Fe-4S] cluster.

It is found in the cytoplasm. It catalyses the reaction iminosuccinate + dihydroxyacetone phosphate = quinolinate + phosphate + 2 H2O + H(+). It participates in cofactor biosynthesis; NAD(+) biosynthesis; quinolinate from iminoaspartate: step 1/1. Its function is as follows. Catalyzes the condensation of iminoaspartate with dihydroxyacetone phosphate to form quinolinate. This is Quinolinate synthase from Prochlorococcus marinus (strain MIT 9313).